We begin with the raw amino-acid sequence, 543 residues long: EH domain-containing protein 2 (543 aa).

A Phosphoserine modification is found at serine 3. The region spanning 55 to 286 (FDGKPMVLVA…DLFRDIQGLP (232 aa)) is the Dynamin-type G domain. Residues 65–72 (GQYSTGKT) form a G1 motif region. 65–72 (GQYSTGKT) contacts ATP. The interval 91 to 92 (EP) is G2 motif. Residues 120-122 (KPF) carry the KPF loop; caveolar targeting motif. Positions 153–156 (DTPG) are G3 motif. Positions 219–222 (NKAD) are G4 motif. Lysine 220 serves as a coordination point for ATP. Residue valine 243 is a region of interest, G5 motif. Tryptophan 258 serves as a coordination point for ATP. A mediates membrane-binding region spans residues 320–340 (SVFGKENKKKQLILKLPVIFA). 5 positions are modified to phosphoserine: serine 438, serine 468, serine 470, serine 484, and serine 493. Positions 449–537 (DKSKYDEIFY…RRLVPPSKRR (89 aa)) constitute an EH domain. The EF-hand domain maps to 481-516 (LPNSVLGRIWKLSDVDRDGMLDDEEFALASHLIEAK). Aspartate 494, aspartate 496, aspartate 498, methionine 500, and glutamate 505 together coordinate Ca(2+). Residues 523–543 (PANLPRRLVPPSKRRHKGSAE) are disordered. Positions 534–543 (SKRRHKGSAE) are enriched in basic residues.

It belongs to the TRAFAC class dynamin-like GTPase superfamily. Dynamin/Fzo/YdjA family. EHD subfamily. Homodimer and homooligomer. Interacts with EHD1. May also interact with EHD3 and EHD4. Interacts with MYOF. Interacts with EHBP1. Interacts with FER1L5 (via second C2 domain). Interacts with CAV1 in a cholesterol-dependent manner. Interacts (via EH domain) with PACSIN2 (via NPF motifs); this interaction probably stabilizes the caveolae. As to expression, highly expressed in heart and moderately expressed in placenta, lung, and skeletal muscle.

The protein resides in the cell membrane. It localises to the membrane. It is found in the caveola. Its subcellular location is the endosome membrane. The protein localises to the cytoplasm. The protein resides in the cytosol. With respect to regulation, the very low intrinsic ATPase activity is increased upon interaction with liposomes. Functionally, ATP- and membrane-binding protein that controls membrane reorganization/tubulation upon ATP hydrolysis. Plays a role in membrane trafficking between the plasma membrane and endosomes. Important for the internalization of GLUT4. Required for fusion of myoblasts to skeletal muscle myotubes. Required for normal translocation of FER1L5 to the plasma membrane. Regulates the equilibrium between cell surface-associated and cell surface-dissociated caveolae by constraining caveolae at the cell membrane. This is EH domain-containing protein 2 from Homo sapiens (Human).